The primary structure comprises 184 residues: Peptidyl-tRNA hydrolase (184 aa).

Y14 is a tRNA binding site. H19 serves as the catalytic Proton acceptor. 3 residues coordinate tRNA: F64, N66, and N112.

This sequence belongs to the PTH family. As to quaternary structure, monomer.

The protein resides in the cytoplasm. It catalyses the reaction an N-acyl-L-alpha-aminoacyl-tRNA + H2O = an N-acyl-L-amino acid + a tRNA + H(+). In terms of biological role, hydrolyzes ribosome-free peptidyl-tRNAs (with 1 or more amino acids incorporated), which drop off the ribosome during protein synthesis, or as a result of ribosome stalling. Catalyzes the release of premature peptidyl moieties from peptidyl-tRNA molecules trapped in stalled 50S ribosomal subunits, and thus maintains levels of free tRNAs and 50S ribosomes. This chain is Peptidyl-tRNA hydrolase, found in Thermoanaerobacter pseudethanolicus (strain ATCC 33223 / 39E) (Clostridium thermohydrosulfuricum).